We begin with the raw amino-acid sequence, 139 residues long: Acidic phospholipase A2 H1E6 (139 aa).

The first 16 residues, 1 to 16, serve as a signal peptide directing secretion; the sequence is MRTLWILAVLQVGVEG. 7 disulfides stabilise this stretch: Cys-42/Cys-132, Cys-44/Cys-60, Cys-59/Cys-111, Cys-65/Cys-139, Cys-66/Cys-104, Cys-73/Cys-97, and Cys-91/Cys-102. Positions 43, 45, and 47 each coordinate Ca(2+). His-63 is a catalytic residue. Asp-64 is a Ca(2+) binding site. The active site involves Asp-105.

In terms of assembly, homodimer. The cofactor is Ca(2+). In terms of tissue distribution, expressed by the venom gland.

It is found in the secreted. It carries out the reaction a 1,2-diacyl-sn-glycero-3-phosphocholine + H2O = a 1-acyl-sn-glycero-3-phosphocholine + a fatty acid + H(+). In terms of biological role, snake venom phospholipase A2 (PLA2) that inhibits ADP-induced platelet aggregation. PLA2 catalyzes the calcium-dependent hydrolysis of the 2-acyl groups in 3-sn-phosphoglycerides. The polypeptide is Acidic phospholipase A2 H1E6 (Calloselasma rhodostoma (Malayan pit viper)).